We begin with the raw amino-acid sequence, 71 residues long: UPF0346 protein BCB4264_A2283 (71 aa).

The protein belongs to the UPF0346 family.

The chain is UPF0346 protein BCB4264_A2283 from Bacillus cereus (strain B4264).